Reading from the N-terminus, the 288-residue chain is Energy-coupling factor transporter ATP-binding protein EcfA2 (288 aa).

Residues 2–244 (IKFEKVNYTY…VDFLKAHELG (243 aa)) form the ABC transporter domain. An ATP-binding site is contributed by 39–46 (GHTGSGKS).

It belongs to the ABC transporter superfamily. Energy-coupling factor EcfA family. Forms a stable energy-coupling factor (ECF) transporter complex composed of 2 membrane-embedded substrate-binding proteins (S component), 2 ATP-binding proteins (A component) and 2 transmembrane proteins (T component).

It is found in the cell membrane. Functionally, ATP-binding (A) component of a common energy-coupling factor (ECF) ABC-transporter complex. Unlike classic ABC transporters this ECF transporter provides the energy necessary to transport a number of different substrates. The protein is Energy-coupling factor transporter ATP-binding protein EcfA2 of Lactococcus lactis subsp. lactis (strain IL1403) (Streptococcus lactis).